We begin with the raw amino-acid sequence, 185 residues long: UPF0397 protein CPR_1556 (185 aa).

The next 5 helical transmembrane spans lie at 11–31, 44–64, 71–91, 111–131, and 149–169; these read IVAI…GSLP, AFLS…IGFI, IVFF…VGLI, IFMF…LVAP, and GVIG…VLIS.

It belongs to the UPF0397 family.

The protein localises to the cell membrane. The chain is UPF0397 protein CPR_1556 from Clostridium perfringens (strain SM101 / Type A).